We begin with the raw amino-acid sequence, 218 residues long: Ribose-5-phosphate isomerase A (218 aa).

Substrate is bound by residues S28–T31, D81–D84, and K94–G97. E103 functions as the Proton acceptor in the catalytic mechanism. K121 is a substrate binding site.

The protein belongs to the ribose 5-phosphate isomerase family. Homodimer.

The catalysed reaction is aldehydo-D-ribose 5-phosphate = D-ribulose 5-phosphate. Its pathway is carbohydrate degradation; pentose phosphate pathway; D-ribose 5-phosphate from D-ribulose 5-phosphate (non-oxidative stage): step 1/1. Catalyzes the reversible conversion of ribose-5-phosphate to ribulose 5-phosphate. This Dichelobacter nodosus (strain VCS1703A) protein is Ribose-5-phosphate isomerase A.